The following is a 294-amino-acid chain: MSNLKEIKRKIKSVHNTQKTTNAMKLVSTAKLKKAEEAAKRSKIYAQKIDEILSEISFQINKIVHNEDDVRLSLFHKKEQIKTVDLIFITADKGLCGGFNIKTLKTVSEMLKEYEAKNINIRLRAIGKTGIEYFNFQKIELLEKYFHLSSSPDYEKACEVIHAAVDDFLNGNTDEVILVHNGYKNMITQELKINHLIPVEPKSIEQTHNSLLELEPEGTELLEDLMKTYFEYNMYYALIDSLAAEHSARMQAMDNATNNAKARVKQLNLAYNKARQESITTELIEIISGVESMK.

The protein belongs to the ATPase gamma chain family. F-type ATPases have 2 components, CF(1) - the catalytic core - and CF(0) - the membrane proton channel. CF(1) has five subunits: alpha(3), beta(3), gamma(1), delta(1), epsilon(1). CF(0) has three main subunits: a, b and c.

Its subcellular location is the cell inner membrane. In terms of biological role, produces ATP from ADP in the presence of a proton gradient across the membrane. The gamma chain is believed to be important in regulating ATPase activity and the flow of protons through the CF(0) complex. The protein is ATP synthase gamma chain of Campylobacter jejuni (strain RM1221).